The following is a 387-amino-acid chain: GTPase Obg (387 aa).

Positions 1-159 constitute an Obg domain; sequence MKFVDEAVIR…RSLRLELMLL (159 aa). Positions 160–333 constitute an OBG-type G domain; sequence ADVGLLGMPN…LALKLMDFID (174 aa). Residues 166-173, 191-195, 213-216, 283-286, and 314-316 contribute to the GTP site; these read GMPNAGKS, FTTLV, DIPG, NKTD, and SAY. Mg(2+) is bound by residues S173 and T193.

The protein belongs to the TRAFAC class OBG-HflX-like GTPase superfamily. OBG GTPase family. In terms of assembly, monomer. Mg(2+) is required as a cofactor.

It is found in the cytoplasm. Its function is as follows. An essential GTPase which binds GTP, GDP and possibly (p)ppGpp with moderate affinity, with high nucleotide exchange rates and a fairly low GTP hydrolysis rate. Plays a role in control of the cell cycle, stress response, ribosome biogenesis and in those bacteria that undergo differentiation, in morphogenesis control. The polypeptide is GTPase Obg (Shewanella loihica (strain ATCC BAA-1088 / PV-4)).